The following is a 240-amino-acid chain: C-type lectin domain family 4 member A (240 aa).

Topologically, residues 1–48 (MASEITYAEVRIKNESNSSVTYSGSPAAPREKPTRHLSKPGSLLVPFT) are cytoplasmic. The short motif at 5–10 (ITYAEV) is the ITIM motif element. Residues 18-38 (SSVTYSGSPAAPREKPTRHLS) are disordered. The chain crosses the membrane as a helical; Signal-anchor for type II membrane protein span at residues 49–69 (SLMVLLLLLAITFLVAFIIYF). Residues 70–240 (QKYSQFLEEK…SVCQMKKIQL (171 aa)) lie on the Extracellular side of the membrane. Intrachain disulfides connect C107/C118, C140/C233, and C208/C225. The C-type lectin domain maps to 129–235 (SKASWSESEK…SGKQQSVCQM (107 aa)). Residues V149 and E155 each coordinate Ca(2+). The N-linked (GlcNAc...) asparagine glycan is linked to N190. Ca(2+)-binding residues include E200, S202, and E206. Alpha-D-mannopyranose is bound by residues 200–202 (EPS) and E206. 211–213 (INH) contributes to the N-acetyl-D-glucosamine binding site. Ca(2+)-binding residues include N221 and D222.

In terms of assembly, may interact with PTPN6 via its ITIM site. In terms of tissue distribution, expressed by myeloid cells (dendritic cells, macrophages, and neutrophils) and B-cells.

It localises to the cell membrane. In terms of biological role, C-type lectin receptor that binds carbohydrates mannose and fucose but also weakly interacts with N-acetylglucosamine (GlcNAc) in a Ca(2+)-dependent manner. Involved in regulating immune reactivity. Once triggered by antigen, it is internalized by clathrin-dependent endocytosis and delivers its antigenic cargo into the antigen presentation pathway resulting in cross-priming of CD8(+) T cells. This cross-presentation and cross-priming are enhanced by TLR7 and TLR8 agonists with increased expansion of the CD8(+) T cells, high production of IFNG and TNF with reduced levels of IL4, IL5 and IL13. In plasmacytoid dendritic cells, inhibits TLR9-mediated IFNA and TNF production. May be involved via its ITIM motif (immunoreceptor tyrosine-based inhibitory motifs) in the inhibition of B-cell-receptor-mediated calcium mobilization and protein tyrosine phosphorylation. The protein is C-type lectin domain family 4 member A (Clec4a) of Rattus norvegicus (Rat).